Reading from the N-terminus, the 131-residue chain is Large ribosomal subunit protein uL22 (131 aa).

This sequence belongs to the universal ribosomal protein uL22 family. Part of the 50S ribosomal subunit.

Functionally, this protein binds specifically to 23S rRNA; its binding is stimulated by other ribosomal proteins, e.g. L4, L17, and L20. It is important during the early stages of 50S assembly. It makes multiple contacts with different domains of the 23S rRNA in the assembled 50S subunit and ribosome. In terms of biological role, the globular domain of the protein is located near the polypeptide exit tunnel on the outside of the subunit, while an extended beta-hairpin is found that lines the wall of the exit tunnel in the center of the 70S ribosome. The sequence is that of Large ribosomal subunit protein uL22 from Phytoplasma mali (strain AT).